We begin with the raw amino-acid sequence, 262 residues long: Protein CUSTOS (262 aa).

Disordered regions lie at residues 1–79 (MAAP…LQTT) and 126–262 (FTSV…IPAN). Over residues 9–18 (SDSESSNSSS) the composition is skewed to low complexity. Polar residues predominate over residues 51 to 61 (ANSQLSTSQPS). The residue at position 61 (S61) is a Phosphoserine. T79 bears the Phosphothreonine mark. The residue at position 138 (S138) is a Phosphoserine. A Phosphothreonine modification is found at T182. The span at 188–199 (KKKRKLKKKAKK) shows a compositional bias: basic residues. A compositionally biased stretch (low complexity) spans 200–209 (VASVDSAVAA). Residues 210–221 (TTPTSMATVQKQ) are compositionally biased toward polar residues. At T211 the chain carries Phosphothreonine. A Nucleolar localization signal (NLS) motif is present at residues 236–241 (KKKKKA).

This sequence belongs to the CUSTOS family.

It localises to the nucleus envelope. Its function is as follows. Plays a role in the regulation of Wnt signaling pathway during early development. The chain is Protein CUSTOS from Homo sapiens (Human).